Reading from the N-terminus, the 351-residue chain is Peptide chain release factor 1 (351 aa).

Q229 carries the post-translational modification N5-methylglutamine.

It belongs to the prokaryotic/mitochondrial release factor family. In terms of processing, methylated by PrmC. Methylation increases the termination efficiency of RF1.

The protein resides in the cytoplasm. Its function is as follows. Peptide chain release factor 1 directs the termination of translation in response to the peptide chain termination codons UAG and UAA. The polypeptide is Peptide chain release factor 1 (Dinoroseobacter shibae (strain DSM 16493 / NCIMB 14021 / DFL 12)).